A 200-amino-acid polypeptide reads, in one-letter code: Sperm acrosome developmental regulator (200 aa).

A Phosphoserine modification is found at S63. Residues 167-183 (QERRRRRRMRSHASHTS) show a composition bias toward basic residues. The disordered stretch occupies residues 167–200 (QERRRRRRMRSHASHTSRHSESVQGLKHDARSPL). Residues 184–200 (RHSESVQGLKHDARSPL) are compositionally biased toward basic and acidic residues.

It is found in the cytoplasmic vesicle. The protein resides in the secretory vesicle. The protein localises to the acrosome. May play an important role in acrosome formation and nucleus shaping during spermiogenesis. This Rattus norvegicus (Rat) protein is Sperm acrosome developmental regulator (Spacdr).